A 396-amino-acid chain; its full sequence is Probable sugar efflux transporter (396 aa).

Residues 1 to 14 (MTTNTVSRKVAWLR) lie on the Cytoplasmic side of the membrane. A helical membrane pass occupies residues 15–35 (VVTLAVAAFIFNTTEFVPVGL). The Periplasmic portion of the chain corresponds to 36–49 (LSDIAQSFHMQTAQ). Residues 50–70 (VGIMLTIYAWVVALMSLPFML) form a helical membrane-spanning segment. Residues 71 to 80 (MTSQVERRKL) are Cytoplasmic-facing. The chain crosses the membrane as a helical span at residues 81-101 (LICLFVVFIASHVLSFLSWSF). T102 is a topological domain (periplasmic). The chain crosses the membrane as a helical span at residues 103–123 (VLVISRIGVAFAHAIFWSITA). The Cytoplasmic portion of the chain corresponds to 124-135 (SLAIRMAPAGKR). A helical membrane pass occupies residues 136 to 156 (AQALSLIATGTALAMVLGLPL). Residues 157 to 169 (GRIVGQYFGWRMT) are Periplasmic-facing. The chain crosses the membrane as a helical span at residues 170 to 190 (FFAIGIGALITLLCLIKLLPL). The Cytoplasmic portion of the chain corresponds to 191-208 (LPSEHSGSLKSLPLLFRR). A helical transmembrane segment spans residues 209-229 (PALMSIYLLTVVVVTAHYTAY). The Periplasmic portion of the chain corresponds to 230-245 (SYIEPFVQNIAGFSAN). The chain crosses the membrane as a helical span at residues 246–266 (FATALLLLLGGAGIIGSVIFG). Residues 267–274 (KLGNQYAS) are Cytoplasmic-facing. A helical transmembrane segment spans residues 275 to 295 (ALVSTAIALLLVCLALLLPAA). At 296 to 298 (NSE) the chain is on the periplasmic side. Residues 299–319 (IHLGVLSIFWGIAMMIIGLGM) traverse the membrane as a helical segment. Over 320 to 332 (QVKVLALAPDATD) the chain is Cytoplasmic. The chain crosses the membrane as a helical span at residues 333–353 (VAMALFSGIFNIGIGAGALVG). Residues 354–363 (NQVSLHWSMS) lie on the Periplasmic side of the membrane. Residues 364–384 (MIGYVGTVPAFAALIWSIIIF) traverse the membrane as a helical segment. Residues 385–396 (RRWPVTLEEQTQ) are Cytoplasmic-facing.

This sequence belongs to the major facilitator superfamily. SotB (TC 2.A.1.2) family.

The protein resides in the cell inner membrane. Functionally, involved in the efflux of sugars. The physiological role may be the reduction of the intracellular concentration of toxic sugars or sugar metabolites. The chain is Probable sugar efflux transporter from Escherichia coli O157:H7.